The following is a 513-amino-acid chain: EGF-like domain-containing protein 1 (513 aa).

The signal sequence occupies residues 1–21; sequence MMHTFLRRLCVVALCLGYIKA. The 37-residue stretch at 72–108 folds into the EGF-like domain; the sequence is PTALCGPPCLNGGECYEPTVGTYMCMCPEAFYGNKCE. 3 cysteine pairs are disulfide-bonded: Cys76-Cys86, Cys80-Cys96, and Cys98-Cys107. The ZP domain occupies 115 to 364; sequence ECSGTEITIN…TSCDSVVCPS (250 aa). Positions 356–411 are disordered; it reads SCDSVVCPSPPQSVPSNPQNIPPANPQNIPPANPQNIPPANPQISPSSSQRKRRAA. Pro residues predominate over residues 375–396; that stretch reads NIPPANPQNIPPANPQNIPPAN. 2 N-linked (GlcNAc...) asparagine glycosylation sites follow: Asn438 and Asn503.

In terms of tissue distribution, component of the acid-insoluble organic matrix of calcified layers of the shell (at protein level).

The protein resides in the secreted. The chain is EGF-like domain-containing protein 1 from Lottia gigantea (Giant owl limpet).